A 293-amino-acid polypeptide reads, in one-letter code: Protease HtpX (293 aa).

The next 2 membrane-spanning stretches (helical) occupy residues 4 to 24 (IALF…ILSL) and 32 to 52 (VMGL…VSLL). His-139 is a binding site for Zn(2+). Glu-140 is an active-site residue. Zn(2+) is bound at residue His-143. 2 consecutive transmembrane segments (helical) span residues 158 to 178 (IVNT…AGFM) and 193 to 213 (MVYF…ASTI). Glu-222 provides a ligand contact to Zn(2+).

This sequence belongs to the peptidase M48B family. The cofactor is Zn(2+).

The protein localises to the cell inner membrane. In Erwinia tasmaniensis (strain DSM 17950 / CFBP 7177 / CIP 109463 / NCPPB 4357 / Et1/99), this protein is Protease HtpX.